Reading from the N-terminus, the 942-residue chain is Protein translocase subunit SecA (942 aa).

Residues Q90, 108-112 (GEGKT), and D509 each bind ATP.

This sequence belongs to the SecA family. In terms of assembly, monomer and homodimer. Part of the essential Sec protein translocation apparatus which comprises SecA, SecYEG and auxiliary proteins SecDF. Other proteins may also be involved.

It is found in the cell inner membrane. The protein resides in the cellular thylakoid membrane. It localises to the cytoplasm. The enzyme catalyses ATP + H2O + cellular proteinSide 1 = ADP + phosphate + cellular proteinSide 2.. In terms of biological role, part of the Sec protein translocase complex. Interacts with the SecYEG preprotein conducting channel. Has a central role in coupling the hydrolysis of ATP to the transfer of proteins into and across the cell membrane, serving as an ATP-driven molecular motor driving the stepwise translocation of polypeptide chains across the membrane. Probably participates in protein translocation into and across both the cytoplasmic and thylakoid membranes in cyanobacterial cells. This is Protein translocase subunit SecA from Prochlorococcus marinus (strain NATL2A).